Reading from the N-terminus, the 218-residue chain is Adapter protein MecA (218 aa).

It belongs to the MecA family. In terms of assembly, homodimer.

Functionally, enables the recognition and targeting of unfolded and aggregated proteins to the ClpC protease or to other proteins involved in proteolysis. The polypeptide is Adapter protein MecA (Exiguobacterium sp. (strain ATCC BAA-1283 / AT1b)).